A 1230-amino-acid chain; its full sequence is ATP-dependent helicase/nuclease subunit A (1230 aa).

One can recognise a UvrD-like helicase ATP-binding domain in the interval 9–480 (STWTDDQWKA…IDLNKNFRSR (472 aa)). 30–37 (AAAGSGKT) serves as a coordination point for ATP. Residues 507-796 (QAELKLGASY…RLMTIHSSKG (290 aa)) enclose the UvrD-like helicase C-terminal domain.

The protein belongs to the helicase family. AddA subfamily. Heterodimer of AddA and AddB/RexB. The cofactor is Mg(2+).

The enzyme catalyses Couples ATP hydrolysis with the unwinding of duplex DNA by translocating in the 3'-5' direction.. The catalysed reaction is ATP + H2O = ADP + phosphate + H(+). The heterodimer acts as both an ATP-dependent DNA helicase and an ATP-dependent, dual-direction single-stranded exonuclease. Recognizes the chi site generating a DNA molecule suitable for the initiation of homologous recombination. The AddA nuclease domain is required for chi fragment generation; this subunit has the helicase and 3' -&gt; 5' nuclease activities. The chain is ATP-dependent helicase/nuclease subunit A from Bacillus licheniformis (strain ATCC 14580 / DSM 13 / JCM 2505 / CCUG 7422 / NBRC 12200 / NCIMB 9375 / NCTC 10341 / NRRL NRS-1264 / Gibson 46).